A 63-amino-acid chain; its full sequence is Large ribosomal subunit protein uL29 (63 aa).

This sequence belongs to the universal ribosomal protein uL29 family.

This is Large ribosomal subunit protein uL29 from Serratia proteamaculans (strain 568).